The following is a 49-amino-acid chain: Turripeptide OL47 (49 aa).

The interval 28 to 49 (RSDTEKKCTGGPDPCPPRQWPD) is disordered. The segment covering 40–49 (DPCPPRQWPD) has biased composition (pro residues).

In terms of processing, contains 4 disulfide bonds. Expressed by the venom duct.

The protein resides in the secreted. Functionally, acts as a neurotoxin by inhibiting an ion channel. In Iotyrris olangoensis (Sea snail), this protein is Turripeptide OL47.